The sequence spans 644 residues: Arabinosyltransferase XEG113 (644 aa).

Over 1 to 17 (MVEGWRNGFRDATNSKP) the chain is Cytoplasmic. The chain crosses the membrane as a helical; Signal-anchor for type II membrane protein span at residues 18-38 (LFVTIYATVIIGVLVSSFYVF). Residues 39–644 (SAIYSPTNGS…QTPEEDHPPL (606 aa)) lie on the Lumenal side of the membrane. N-linked (GlcNAc...) asparagine glycans are attached at residues asparagine 46 and asparagine 70. Positions 226-228 (DTD) match the DXD motif motif. 2 N-linked (GlcNAc...) asparagine glycosylation sites follow: asparagine 446 and asparagine 542.

It belongs to the glycosyltransferase 77 family.

The protein resides in the golgi apparatus membrane. Plays a role in the arabinosylation of cell wall components. Involved in the arabinosylation of extensin proteins in root hair cells. Extensins are structural glycoproteins present in cell walls and its arabinosylation is important for cell elongation, root hair cell development, lateral root development and root hair tip growth. This Arabidopsis thaliana (Mouse-ear cress) protein is Arabinosyltransferase XEG113.